The following is a 397-amino-acid chain: Lysophospholipid transporter LplT (397 aa).

At 1–17 the chain is on the periplasmic side; that stretch reads MSESVHTNTSLWSKGMK. The chain crosses the membrane as a helical span at residues 18-38; it reads AVIVAQFLSAFGDNALLFATL. Residues 39–52 are Cytoplasmic-facing; that stretch reads ALLKAQFYPEWSQP. A helical transmembrane segment spans residues 53–73; that stretch reads ILQMVFVGAYILFAPFVGQVA. Over 74–90 the chain is Periplasmic; sequence DSFAKGRVMMFANGLKL. Residues 91–111 form a helical membrane-spanning segment; it reads LGAASICFGINPFLGYTLVGV. Over 112–144 the chain is Cytoplasmic; the sequence is GAAAYSPAKYGILGELTTGSKLVKANGLMEAST. The chain crosses the membrane as a helical span at residues 145–165; it reads IAAILLGSVAGGVLADWHVLV. Position 166 (A166) is a topological domain, periplasmic. Residues 167-187 form a helical membrane-spanning segment; that stretch reads LAACALAYGGAVVANIYIPKL. The Cytoplasmic portion of the chain corresponds to 188-226; that stretch reads AAARPGQSWNLINMTRSFLNACTSLWRNGETRFSLVGTS. Residues 227 to 247 form a helical membrane-spanning segment; the sequence is LFWGAGVTLRFLLVLWVPVAL. Residues 248–256 are Periplasmic-facing; sequence GITDNATPT. A helical transmembrane segment spans residues 257–277; it reads YLNAMVAIGIVVGAGAAAKLV. The Cytoplasmic portion of the chain corresponds to 278–280; the sequence is TLE. A helical transmembrane segment spans residues 281-301; that stretch reads TMSRCMPAGILIGVVVLIFSL. The Periplasmic portion of the chain corresponds to 302-304; that stretch reads QHE. Residues 305 to 325 traverse the membrane as a helical segment; that stretch reads LLPAYALLMLIGVMGGFFVVP. Topologically, residues 326–343 are cytoplasmic; sequence LNALLQERGKKSVGAGNA. The helical transmembrane segment at 344 to 364 threads the bilayer; the sequence is IAVQNLGENSAMLLMLGIYSL. The Periplasmic segment spans residues 365-366; that stretch reads AV. A helical membrane pass occupies residues 367 to 387; the sequence is MVGIPVVPIGIGFGALFALAI. The Cytoplasmic segment spans residues 388-397; the sequence is TALWIWQRRH.

This sequence belongs to the major facilitator superfamily. LplT (TC 2.A.1.42) family.

The protein resides in the cell inner membrane. In terms of biological role, catalyzes the facilitated diffusion of 2-acyl-glycero-3-phosphoethanolamine (2-acyl-GPE) into the cell. This chain is Lysophospholipid transporter LplT, found in Shigella sonnei (strain Ss046).